The primary structure comprises 290 residues: Protein SSO1 (290 aa).

Topologically, residues 1–265 are cytoplasmic; sequence MSYNNPYQLE…ARKARKNKIR (265 aa). Residues 190–252 form the t-SNARE coiled-coil homology domain; it reads LAEVQARHQE…EQGVGHTDKA (63 aa). The chain crosses the membrane as a helical; Anchor for type IV membrane protein span at residues 266-287; the sequence is CWLIVFAIIVVVVVVVVVPAVV. Residues 288–290 lie on the Extracellular side of the membrane; sequence KTR.

It belongs to the syntaxin family.

Its subcellular location is the membrane. Its function is as follows. Required for vesicle fusion with the plasma membrane. This Saccharomyces cerevisiae (strain ATCC 204508 / S288c) (Baker's yeast) protein is Protein SSO1 (SSO1).